Reading from the N-terminus, the 516-residue chain is Flagellar radial spoke protein 3 (516 aa).

Polar residues-rich tracts occupy residues 1–11 and 62–74; these read MVQAKAQQQLY and ATQT…SPAS. Disordered stretches follow at residues 1–32, 60–90, 388–412, and 424–447; these read MVQA…EDET, ADAT…TPEA, NAKW…AAEE, and AAAE…DGVE. Residues 391–412 show a composition bias toward basic and acidic residues; sequence WEADKAEAAEKARAEAEAAAEE.

The protein belongs to the flagellar radial spoke RSP3 family. Interacts with FAP91. Protein 3 is one of the 5 radial spoke proteins that are phosphorylated. Post-translationally, protein 3a might only differ from protein 3 in being unphosphorylated.

Its subcellular location is the cytoplasm. The protein localises to the cytoskeleton. It localises to the flagellum axoneme. Its function is as follows. Protein 3 may attach the radial spoke to the outer doublet microtubule or is required to form a stable spoke structure. Functionally, flagellar radial spokes contribute to the regulation of dynein arm activity and thus the pattern of flagellar bending. They consist of a thin stalk, which is attached to the a subfiber of the outer doublet microtubule, and a bulbous head, which is attached to the stalk and appears to interact with the projections from the central pair of microtubules. In Chlamydomonas reinhardtii (Chlamydomonas smithii), this protein is Flagellar radial spoke protein 3.